The sequence spans 707 residues: Ribosomal RNA large subunit methyltransferase K/L (707 aa).

The THUMP domain occupies 44–155; that stretch reads VIYNLCLWSR…NDILTVSFDL (112 aa).

It belongs to the methyltransferase superfamily. RlmKL family.

Its subcellular location is the cytoplasm. It carries out the reaction guanosine(2445) in 23S rRNA + S-adenosyl-L-methionine = N(2)-methylguanosine(2445) in 23S rRNA + S-adenosyl-L-homocysteine + H(+). It catalyses the reaction guanosine(2069) in 23S rRNA + S-adenosyl-L-methionine = N(2)-methylguanosine(2069) in 23S rRNA + S-adenosyl-L-homocysteine + H(+). In terms of biological role, specifically methylates the guanine in position 2445 (m2G2445) and the guanine in position 2069 (m7G2069) of 23S rRNA. This is Ribosomal RNA large subunit methyltransferase K/L from Legionella pneumophila subsp. pneumophila (strain Philadelphia 1 / ATCC 33152 / DSM 7513).